A 410-amino-acid polypeptide reads, in one-letter code: NADH-quinone oxidoreductase subunit H (410 aa).

9 consecutive transmembrane segments (helical) span residues Leu16–Ile36, Trp84–Ile104, Leu124–Leu144, Val165–Thr185, Val198–Glu218, Val260–Ile280, Trp288–Leu308, Phe320–Ala340, and Trp353–Trp373. Residues Ser384–Ala410 are disordered.

Belongs to the complex I subunit 1 family. NDH-1 is composed of 14 different subunits. Subunits NuoA, H, J, K, L, M, N constitute the membrane sector of the complex.

Its subcellular location is the cell membrane. It carries out the reaction a quinone + NADH + 5 H(+)(in) = a quinol + NAD(+) + 4 H(+)(out). In terms of biological role, NDH-1 shuttles electrons from NADH, via FMN and iron-sulfur (Fe-S) centers, to quinones in the respiratory chain. The immediate electron acceptor for the enzyme in this species is believed to be menaquinone. Couples the redox reaction to proton translocation (for every two electrons transferred, four hydrogen ions are translocated across the cytoplasmic membrane), and thus conserves the redox energy in a proton gradient. This is NADH-quinone oxidoreductase subunit H from Mycolicibacterium gilvum (strain PYR-GCK) (Mycobacterium gilvum (strain PYR-GCK)).